Here is a 294-residue protein sequence, read N- to C-terminus: MLILGSHVSLKGNDMFYGSVLEALEYNANTMMVYTGAPQNTIRKPIETMKIEEAHALMKEKGIDLNHVVVHAPYIINLCNPDPERRAFAVEFLTKEVIRVGQMGINQMVLHPGSAVGGNREEAVQWISEGLNQIIDNTKSYNVRIALETMAGKGNEIGKTFEEIKAIIDGVDDKSRVSVCFDTCHVHDAGYDVIHDLDKTLQLFDDIVGLNYISVVHVNDSKNELGASKDRHENIGFGYIGYDALLKVIYHEAFKEIPKILETPYVNDKPPYKLEIQMIKDRVFDNELKTKLEK.

Zn(2+) contacts are provided by histidine 71, histidine 111, glutamate 148, aspartate 182, histidine 185, histidine 217, aspartate 230, histidine 232, and glutamate 262.

This sequence belongs to the AP endonuclease 2 family. It depends on Zn(2+) as a cofactor.

The catalysed reaction is Endonucleolytic cleavage to 5'-phosphooligonucleotide end-products.. Endonuclease IV plays a role in DNA repair. It cleaves phosphodiester bonds at apurinic or apyrimidinic (AP) sites, generating a 3'-hydroxyl group and a 5'-terminal sugar phosphate. The chain is Probable endonuclease 4 from Acholeplasma laidlawii (strain PG-8A).